Reading from the N-terminus, the 369-residue chain is S-adenosylmethionine:tRNA ribosyltransferase-isomerase (369 aa).

Belongs to the QueA family. Monomer.

It is found in the cytoplasm. The enzyme catalyses 7-aminomethyl-7-carbaguanosine(34) in tRNA + S-adenosyl-L-methionine = epoxyqueuosine(34) in tRNA + adenine + L-methionine + 2 H(+). It functions in the pathway tRNA modification; tRNA-queuosine biosynthesis. Functionally, transfers and isomerizes the ribose moiety from AdoMet to the 7-aminomethyl group of 7-deazaguanine (preQ1-tRNA) to give epoxyqueuosine (oQ-tRNA). This is S-adenosylmethionine:tRNA ribosyltransferase-isomerase from Acaryochloris marina (strain MBIC 11017).